Consider the following 467-residue polypeptide: 6-phospho-beta-galactosidase (467 aa).

Positions 19, 116, 159, 160, and 297 each coordinate D-galactose 6-phosphate. E160 serves as the catalytic Proton donor. Catalysis depends on E375, which acts as the Nucleophile. D-galactose 6-phosphate is bound by residues S428, W429, K435, and Y437.

Belongs to the glycosyl hydrolase 1 family.

The catalysed reaction is a 6-phospho-beta-D-galactoside + H2O = D-galactose 6-phosphate + an alcohol. It functions in the pathway carbohydrate metabolism; lactose degradation; D-galactose 6-phosphate and beta-D-glucose from lactose 6-phosphate: step 1/1. Its activity is regulated as follows. Inhibited by both galactose-6-phosphate and ATP. The sequence is that of 6-phospho-beta-galactosidase from Leptotrichia buccalis (strain ATCC 14201 / DSM 1135 / JCM 12969 / NCTC 10249 / C-1013-b).